The following is a 202-amino-acid chain: Xanthine phosphoribosyltransferase (202 aa).

Positions 20 and 27 each coordinate xanthine. 128–132 (ASGGT) is a 5-phospho-alpha-D-ribose 1-diphosphate binding site. Xanthine is bound at residue Lys-156.

It belongs to the purine/pyrimidine phosphoribosyltransferase family. Xpt subfamily. As to quaternary structure, homodimer.

It localises to the cytoplasm. It carries out the reaction XMP + diphosphate = xanthine + 5-phospho-alpha-D-ribose 1-diphosphate. It functions in the pathway purine metabolism; XMP biosynthesis via salvage pathway; XMP from xanthine: step 1/1. Converts the preformed base xanthine, a product of nucleic acid breakdown, to xanthosine 5'-monophosphate (XMP), so it can be reused for RNA or DNA synthesis. In Deinococcus geothermalis (strain DSM 11300 / CIP 105573 / AG-3a), this protein is Xanthine phosphoribosyltransferase.